The primary structure comprises 237 residues: Increased recombination centers protein 6 (237 aa).

It belongs to the IRC6 family.

Functionally, involved in gross chromosomal rearrangements (GCRs) and telomere healing. This is Increased recombination centers protein 6 (IRC6) from Saccharomyces cerevisiae (strain ATCC 204508 / S288c) (Baker's yeast).